Consider the following 152-residue polypeptide: Protein ripply3 (152 aa).

Residues 1 to 24 (MRPEAAGVREARGRLCHCPGDDPG) are compositionally biased toward basic and acidic residues. Disordered regions lie at residues 1-76 (MRPE…GAFG) and 113-152 (FYND…ERAE). A WRPW motif motif is present at residues 40 to 43 (WRPW). A ripply homology domain region spans residues 79 to 114 (HPVRLYLPVSKRQEYLQSSGEKVLASFPVQATIHFY). Positions 116–130 (DDSESGSEEEQEEEA) are enriched in acidic residues. Basic and acidic residues predominate over residues 140-152 (AEVRDSAQEERAE).

This sequence belongs to the ripply family. Interacts with TBX1.

It localises to the nucleus. In terms of biological role, acts as a transcriptional corepressor. Negative regulator of the transcriptional activity of TBX1. Plays a role in the development of the pharyngeal apparatus and derivatives. In Mus musculus (Mouse), this protein is Protein ripply3 (Ripply3).